A 243-amino-acid chain; its full sequence is Protein HUA2 (243 aa).

Its subcellular location is the cytoplasm. In terms of biological role, may have a role in actin patch assembly. In Saccharomyces cerevisiae (strain ATCC 204508 / S288c) (Baker's yeast), this protein is Protein HUA2 (HUA2).